Here is a 310-residue protein sequence, read N- to C-terminus: Malate dehydrogenase (310 aa).

Residues 7 to 12 (GAGNVG) and Asp-32 each bind NAD(+). Substrate is bound by residues Arg-81 and Arg-87. NAD(+)-binding positions include Asn-94 and 117–119 (VSN). Substrate contacts are provided by Asn-119 and Arg-150. The active-site Proton acceptor is His-174.

This sequence belongs to the LDH/MDH superfamily. MDH type 3 family.

It catalyses the reaction (S)-malate + NAD(+) = oxaloacetate + NADH + H(+). Catalyzes the reversible oxidation of malate to oxaloacetate. This chain is Malate dehydrogenase, found in Chloroherpeton thalassium (strain ATCC 35110 / GB-78).